The chain runs to 469 residues: 3-isopropylmalate dehydratase large subunit (469 aa).

Cys347, Cys410, and Cys413 together coordinate [4Fe-4S] cluster.

It belongs to the aconitase/IPM isomerase family. LeuC type 1 subfamily. In terms of assembly, heterodimer of LeuC and LeuD. It depends on [4Fe-4S] cluster as a cofactor.

The catalysed reaction is (2R,3S)-3-isopropylmalate = (2S)-2-isopropylmalate. It functions in the pathway amino-acid biosynthesis; L-leucine biosynthesis; L-leucine from 3-methyl-2-oxobutanoate: step 2/4. In terms of biological role, catalyzes the isomerization between 2-isopropylmalate and 3-isopropylmalate, via the formation of 2-isopropylmaleate. The protein is 3-isopropylmalate dehydratase large subunit of Cupriavidus pinatubonensis (strain JMP 134 / LMG 1197) (Cupriavidus necator (strain JMP 134)).